Consider the following 391-residue polypeptide: Curcumin synthase 2 (391 aa).

The active site involves cysteine 166.

The protein belongs to the thiolase-like superfamily. Chalcone/stilbene synthases family. In terms of assembly, homodimer.

It catalyses the reaction (E)-feruloylacetyl-CoA + (E)-feruloyl-CoA + H2O = curcumin + CO2 + 2 CoA. Its pathway is secondary metabolite biosynthesis; flavonoid biosynthesis. Functionally, catalyzes the synthesis of curcumin by condensing feruloyl-CoA with a diketide-CoA in the curcuminoid biosynthesis. This chain is Curcumin synthase 2 (CURS2), found in Curcuma longa (Turmeric).